We begin with the raw amino-acid sequence, 75 residues long: Kappa-scoloptoxin(03)-Ssm1e (75 aa).

Residues 1–23 (MKSSMAILLVMALIIFTLDKNYS) form the signal peptide.

The protein belongs to the scoloptoxin-03 family. Contains 3 disulfide bonds. In terms of tissue distribution, expressed by the venom gland.

The protein localises to the secreted. In terms of biological role, inhibits voltage-gated potassium channels. This is Kappa-scoloptoxin(03)-Ssm1e from Scolopendra mutilans (Chinese red-headed centipede).